We begin with the raw amino-acid sequence, 322 residues long: 4-diphosphocytidyl-2-C-methyl-D-erythritol kinase (322 aa).

Residue Lys18 is part of the active site. Residue 130–140 (PMGAGLGGGSS) participates in ATP binding. The active site involves Asp172.

Belongs to the GHMP kinase family. IspE subfamily.

It carries out the reaction 4-CDP-2-C-methyl-D-erythritol + ATP = 4-CDP-2-C-methyl-D-erythritol 2-phosphate + ADP + H(+). It functions in the pathway isoprenoid biosynthesis; isopentenyl diphosphate biosynthesis via DXP pathway; isopentenyl diphosphate from 1-deoxy-D-xylulose 5-phosphate: step 3/6. Functionally, catalyzes the phosphorylation of the position 2 hydroxy group of 4-diphosphocytidyl-2C-methyl-D-erythritol. The sequence is that of 4-diphosphocytidyl-2-C-methyl-D-erythritol kinase from Psychrobacter cryohalolentis (strain ATCC BAA-1226 / DSM 17306 / VKM B-2378 / K5).